Reading from the N-terminus, the 251-residue chain is Flap endonuclease Xni (251 aa).

Aspartate 104 is a Mg(2+) binding site. One can recognise a 5'-3' exonuclease domain in the interval 160 to 249 (VLPRQLPDYW…IDGNLQQLRL (90 aa)). Residues leucine 171, alanine 172, proline 180, valine 182, and isoleucine 185 each contribute to the K(+) site. Residues 184-189 (GIGPKS) are interaction with DNA.

Belongs to the Xni family. Mg(2+) is required as a cofactor. It depends on K(+) as a cofactor.

In terms of biological role, has flap endonuclease activity. During DNA replication, flap endonucleases cleave the 5'-overhanging flap structure that is generated by displacement synthesis when DNA polymerase encounters the 5'-end of a downstream Okazaki fragment. This chain is Flap endonuclease Xni, found in Salmonella schwarzengrund (strain CVM19633).